Consider the following 408-residue polypeptide: Lysosome-associated membrane glycoprotein 3 (408 aa).

An N-terminal signal peptide occupies residues 1–20; that stretch reads MPGQTSAVAVLLCLAVILHG. At 21–373 the chain is on the lumenal side; sequence YQIREKEFPE…IVDECLSDYT (353 aa). Residues Asn-55 and Asn-225 are each glycosylated (N-linked (GlcNAc...) asparagine). Cys-230 and Cys-267 are disulfide-bonded. N-linked (GlcNAc...) asparagine glycosylation is present at Asn-284. Cysteines 331 and 368 form a disulfide. Residues 374–394 form a helical membrane-spanning segment; it reads VVLPVVGIIVVVLCVVGLGIY. At 395-408 the chain is on the cytoplasmic side; the sequence is KIRQRRQSSAYQRI.

This sequence belongs to the LAMP family. In terms of assembly, monomer. Interacts with FURIN.

It localises to the cell surface. The protein localises to the lysosome membrane. It is found in the cytoplasmic vesicle membrane. Its subcellular location is the early endosome membrane. In terms of biological role, lysosomal membrane glycoprotein which plays a role in the unfolded protein response (UPR) that contributes to protein degradation and cell survival during proteasomal dysfunction. Plays a role in the process of fusion of the lysosome with the autophagosome, thereby modulating the autophagic process. Promotes hepatocellular lipogenesis through activation of the PI3K/Akt pathway. May also play a role in dendritic cell function and in adaptive immunity. The sequence is that of Lysosome-associated membrane glycoprotein 3 (Lamp3) from Rattus norvegicus (Rat).